Here is a 278-residue protein sequence, read N- to C-terminus: MSAPGSPDQAYDFLLKFLLVGDRDVGKSEILESLQDGTAESPYSHLGGIDYKTTTILLDGQRVKLKLWDTSGQGRFCTIFRSYSRGAQGVILVYDIANRWSFEGMDRWIKKIEEHAPGVPKILVGNRLHLAFKRQVPREQAQAYAERLGVTFFEVSPLCNFNIIESFTELARIVLLRHRLNWLGRPSKVLSLQDLCCRTIVSCTPVHLVDKLPLPIALRSHLKSFSMAKGLNARMMRGLSYSLTTSSTHKRSSLCKVKIVCPPQSPPKNCTRNSCKIS.

GTP is bound by residues G26, K27, and S28. S28 lines the Mg(2+) pocket. The switch-I stretch occupies residues 41–49; that stretch reads SPYSHLGGI. D69 lines the Mg(2+) pocket. GTP is bound by residues G72, N126, and R127. Positions 72-88 are switch-II; that stretch reads GQGRFCTIFRSYSRGAQ. Residues 175–228 form the SOCS box domain; the sequence is LLRHRLNWLGRPSKVLSLQDLCCRTIVSCTPVHLVDKLPLPIALRSHLKSFSMA. Residue C270 is the site of S-palmitoyl cysteine attachment. The S-geranylgeranyl cysteine moiety is linked to residue C275.

The protein belongs to the small GTPase superfamily. Rab family. The cofactor is Mg(2+). In terms of tissue distribution, expressed in brain, lung, heart, skeletal muscle, kidney and liver. Highest expression in brain. Expressed in fetal brain and kidney.

The protein localises to the membrane. Its subcellular location is the cytoplasm. The protein resides in the mitochondrion. It carries out the reaction GTP + H2O = GDP + phosphate + H(+). It functions in the pathway protein modification; protein ubiquitination. Regulated by guanine nucleotide exchange factors (GEFs) which promote the exchange of bound GDP for free GTP. Regulated by GTPase activating proteins (GAPs) which increase the GTP hydrolysis activity. Inhibited by GDP dissociation inhibitors (GDIs). In terms of biological role, may act as substrate-recognition component of the ECS(RAB40) E3 ubiquitin ligase complex which mediates the ubiquitination and subsequent proteasomal degradation of target proteins. The Rab40 subfamily belongs to the Rab family that are key regulators of intracellular membrane trafficking, from the formation of transport vesicles to their fusion with membranes. Rabs cycle between an inactive GDP-bound form and an active GTP-bound form that is able to recruit to membranes different sets of downstream effectors directly responsible for vesicle formation, movement, tethering and fusion. This is Ras-related protein Rab-40A-like from Homo sapiens (Human).